Here is a 362-residue protein sequence, read N- to C-terminus: uncharacterized protein (362 aa).

Disordered stretches follow at residues 1-117 (MASK…GLNR), 153-172 (SSAPGTSASTSGSPSVGIRK), and 210-266 (RHFD…SSSN). Residues 12 to 23 (AKKEKEIKKEIE) show a composition bias toward basic and acidic residues. A compositionally biased stretch (acidic residues) spans 51–70 (ENDDTDGDGKEEDAQKEDDI). Low complexity-rich tracts occupy residues 100–112 (NSPPSESSSTRNT), 153–167 (SSAPGTSASTSGSPS), and 241–265 (VPPSAVSPAPGSGSSASSGTSTSSS).

This is an uncharacterized protein from Caenorhabditis elegans.